A 199-amino-acid polypeptide reads, in one-letter code: Recombination protein RecR (199 aa).

A C4-type zinc finger spans residues C60–C75. The Toprim domain occupies S83–P178.

The protein belongs to the RecR family.

Functionally, may play a role in DNA repair. It seems to be involved in an RecBC-independent recombinational process of DNA repair. It may act with RecF and RecO. The protein is Recombination protein RecR of Paracidovorax citrulli (strain AAC00-1) (Acidovorax citrulli).